Here is a 293-residue protein sequence, read N- to C-terminus: 4-hydroxy-tetrahydrodipicolinate synthase (293 aa).

Thr-47 is a pyruvate binding site. Tyr-135 (proton donor/acceptor) is an active-site residue. Lys-164 serves as the catalytic Schiff-base intermediate with substrate. Ile-206 is a pyruvate binding site.

The protein belongs to the DapA family. As to quaternary structure, homotetramer; dimer of dimers.

The protein localises to the cytoplasm. It carries out the reaction L-aspartate 4-semialdehyde + pyruvate = (2S,4S)-4-hydroxy-2,3,4,5-tetrahydrodipicolinate + H2O + H(+). The protein operates within amino-acid biosynthesis; L-lysine biosynthesis via DAP pathway; (S)-tetrahydrodipicolinate from L-aspartate: step 3/4. In terms of biological role, catalyzes the condensation of (S)-aspartate-beta-semialdehyde [(S)-ASA] and pyruvate to 4-hydroxy-tetrahydrodipicolinate (HTPA). The chain is 4-hydroxy-tetrahydrodipicolinate synthase from Flavobacterium psychrophilum (strain ATCC 49511 / DSM 21280 / CIP 103535 / JIP02/86).